A 677-amino-acid polypeptide reads, in one-letter code: Methionine--tRNA ligase (677 aa).

Positions 15-25 match the 'HIGH' region motif; the sequence is PYANGSIHLGH. Zn(2+) is bound by residues cysteine 146, cysteine 149, cysteine 159, and cysteine 162. A 'KMSKS' region motif is present at residues 333–337; it reads KMSKS. An ATP-binding site is contributed by lysine 336. The region spanning 575 to 677 is the tRNA-binding domain; it reads DFAKVDLRVA…AGAKPGHQVK (103 aa).

It belongs to the class-I aminoacyl-tRNA synthetase family. MetG type 1 subfamily. In terms of assembly, homodimer. The cofactor is Zn(2+).

It localises to the cytoplasm. It catalyses the reaction tRNA(Met) + L-methionine + ATP = L-methionyl-tRNA(Met) + AMP + diphosphate. In terms of biological role, is required not only for elongation of protein synthesis but also for the initiation of all mRNA translation through initiator tRNA(fMet) aminoacylation. This Escherichia coli O127:H6 (strain E2348/69 / EPEC) protein is Methionine--tRNA ligase.